A 314-amino-acid polypeptide reads, in one-letter code: Regulator of microtubule dynamics protein 1 (314 aa).

N6-succinyllysine is present on Lys-165. TPR repeat units lie at residues 168-204 and 222-258; these read AICL…NPKD and PWYQ…DPNF.

It belongs to the RMDN family. As to quaternary structure, interacts with microtubules.

It localises to the cytoplasm. The protein resides in the cytoskeleton. It is found in the spindle. The protein localises to the spindle pole. This Pongo abelii (Sumatran orangutan) protein is Regulator of microtubule dynamics protein 1 (RMDN1).